The chain runs to 782 residues: Spastin (782 aa).

Residues 1-103 (MVRTKNQSSS…GNAPRGGNSS (103 aa)) are disordered. At 1–115 (MVRTKNQSSS…KQNLYVVSFP (115 aa)) the chain is on the cytoplasmic side. The segment at 1 to 212 (MVRTKNQSSS…RAIQPLEMAG (212 aa)) is required for localization to punctate cytoplasmic foci. The span at 8–19 (SSSSSASSSTKS) shows a compositional bias: low complexity. Residues 25–34 (GGTTNRSRSC) are compositionally biased toward polar residues. 2 stretches are compositionally biased toward low complexity: residues 44–75 (SKSS…GSSP) and 84–93 (TTDADLTPTS). Residues 116–136 (IIFLFNVLRSLIYQLFCIFRY) constitute an intramembrane region (helical). At 137–782 (LYGASTKVIY…WSQDYGDITI (646 aa)) the chain is on the cytoplasmic side. Residues 210-782 (MAGNRAGGNY…WSQDYGDITI (573 aa)) are sufficient for interaction with microtubules and microtubule severing. One can recognise an MIT domain in the interval 235–310 (HRRAFEYISK…SMARDRLHFL (76 aa)). Positions 325–479 (KEQQQKKKSP…GSGSGASTPM (155 aa)) are disordered. The segment covering 334 to 343 (PQQQPQQQQQ) has biased composition (low complexity). Polar residues-rich tracts occupy residues 408–426 (NKSQ…STSV) and 447–463 (QFSS…RTPI). Residues 465-479 (NNAAGGSGSGASTPM) are required for interaction with microtubules. 547 to 554 (GPPGNGKT) is a binding site for ATP.

It belongs to the AAA ATPase family. Spastin subfamily. Homohexamer. The homohexamer is stabilized by ATP-binding. The homohexamer may adopt a ring conformation through which microtubules pass prior to being severed. Interacts with microtubules. Interacts with atl; may be involved in microtubule dynamics.

It localises to the membrane. The protein localises to the cytoplasm. The protein resides in the cytoskeleton. Its subcellular location is the microtubule organizing center. It is found in the centrosome. It localises to the chromosome. The protein localises to the lipid droplet. The enzyme catalyses n ATP + n H2O + a microtubule = n ADP + n phosphate + (n+1) alpha/beta tubulin heterodimers.. In terms of biological role, ATP-dependent microtubule severing protein. Stimulates microtubule minus-end depolymerization and poleward microtubule flux in the mitotic spindle. Regulates microtubule stability in the neuromuscular junction synapse. Involved in lipid metabolism by regulating the size and distribution of lipid droplets. Involved in axon regeneration by regulating microtubule severing. This Drosophila grimshawi (Hawaiian fruit fly) protein is Spastin.